Reading from the N-terminus, the 336-residue chain is N-acetyl-gamma-glutamyl-phosphate reductase (336 aa).

The active site involves cysteine 143.

This sequence belongs to the NAGSA dehydrogenase family. Type 1 subfamily.

It localises to the cytoplasm. The catalysed reaction is N-acetyl-L-glutamate 5-semialdehyde + phosphate + NADP(+) = N-acetyl-L-glutamyl 5-phosphate + NADPH + H(+). Its pathway is amino-acid biosynthesis; L-arginine biosynthesis; N(2)-acetyl-L-ornithine from L-glutamate: step 3/4. Functionally, catalyzes the NADPH-dependent reduction of N-acetyl-5-glutamyl phosphate to yield N-acetyl-L-glutamate 5-semialdehyde. The polypeptide is N-acetyl-gamma-glutamyl-phosphate reductase (Dictyoglomus thermophilum (strain ATCC 35947 / DSM 3960 / H-6-12)).